The chain runs to 886 residues: Protein suppressor of hairy wing (886 aa).

Disordered regions lie at residues 24–62 and 167–211; these read SVSPSKDKRPTRMKLLNNLSASSPQTYPPKTDKRSGIKG and DEVV…KNSG. Residues 184-201 are compositionally biased toward acidic residues; it reads VTEEEEEEEEDDLDEEGD. Residues 221–243 form a C2H2-type 1; atypical zinc finger; the sequence is HVCGKCYKTFRRLMSLKKHLEFC. The C2H2-type 2 zinc finger occupies 291 to 314; it reads INCPDCPKSFKTQTSYERHIFITH. The C2H2-type 3; atypical zinc-finger motif lies at 320–342; the sequence is YPCSICNANLRSEALLKLHEEQH. 9 consecutive C2H2-type zinc fingers follow at residues 349 to 367, 381 to 403, 414 to 436, 442 to 464, 470 to 492, 498 to 520, 524 to 546, 554 to 578, and 600 to 623; these read YACKICGKDFTRSYHLKRH, MSCKVCDRVFYRLDNLRSHLKHH, YMCHVCKNCFYSLSTLNIHIRTH, FDCDLCDKKLSALVALKKHRRYH, YSCTVCNQAFAVKEVLNRHMKRH, HKCEECGKSFIQATQLRTHSKTH, FACDMCEEKFKTEKQLERHVKEH, FSCTECKRHFRNTAQLKQHMDAGDH, and TDCAICDKNFDSSETLRKHIRSVH. Over residues 571 to 587 the composition is skewed to basic and acidic residues; that stretch reads QHMDAGDHSEKSGEKPQ. The tract at residues 571–594 is disordered; sequence QHMDAGDHSEKSGEKPQRAKRSST.

It is found in the nucleus. Functionally, component of the gypsy chromatin insulator complex which is required for the function of the gypsy chromatin insulator and other endogenous chromatin insulators. Chromatin insulators are regulatory elements which establish independent domains of transcriptional activity within eukaryotic genomes. Insulators have two defining properties; they can block the communication between an enhancer and a promoter when placed between them and can also buffer transgenes from position effect variegation (PEV). Insulators are proposed to structure the chromatin fiber into independent domains of differing transcriptional potential by promoting the formation of distinct chromatin loops. This chromatin looping may involve the formation of insulator bodies, where homotypic interactions between individual subunits of the insulator complex could promote the clustering of widely spaced insulators at the nuclear periphery. Within the gypsy insulator complex, this protein binds specifically to a region of the gypsy element located 3' of the 5' long terminal repeat (LTR), and may also mediate interaction with other endogenous insulators at sites distinct from those recognized by Cp190. Cooperates with pita and cliff to recruit Cp190 and regulate insulator function at the front-ultraabdominal (Fub) boundary. In Drosophila ananassae (Fruit fly), this protein is Protein suppressor of hairy wing (su(Hw)).